The sequence spans 306 residues: 4-hydroxy-3-methylbut-2-enyl diphosphate reductase (306 aa).

Cysteine 12 provides a ligand contact to [4Fe-4S] cluster. Residues histidine 41 and histidine 74 each coordinate (2E)-4-hydroxy-3-methylbut-2-enyl diphosphate. The dimethylallyl diphosphate site is built by histidine 41 and histidine 74. Isopentenyl diphosphate contacts are provided by histidine 41 and histidine 74. Cysteine 96 is a binding site for [4Fe-4S] cluster. Residue histidine 124 coordinates (2E)-4-hydroxy-3-methylbut-2-enyl diphosphate. Position 124 (histidine 124) interacts with dimethylallyl diphosphate. Residue histidine 124 participates in isopentenyl diphosphate binding. The Proton donor role is filled by glutamate 126. Position 164 (threonine 164) interacts with (2E)-4-hydroxy-3-methylbut-2-enyl diphosphate. Cysteine 194 provides a ligand contact to [4Fe-4S] cluster. (2E)-4-hydroxy-3-methylbut-2-enyl diphosphate-binding residues include serine 222, serine 223, asparagine 224, and serine 266. The dimethylallyl diphosphate site is built by serine 222, serine 223, asparagine 224, and serine 266. Isopentenyl diphosphate is bound by residues serine 222, serine 223, asparagine 224, and serine 266.

Belongs to the IspH family. [4Fe-4S] cluster is required as a cofactor.

The catalysed reaction is isopentenyl diphosphate + 2 oxidized [2Fe-2S]-[ferredoxin] + H2O = (2E)-4-hydroxy-3-methylbut-2-enyl diphosphate + 2 reduced [2Fe-2S]-[ferredoxin] + 2 H(+). It carries out the reaction dimethylallyl diphosphate + 2 oxidized [2Fe-2S]-[ferredoxin] + H2O = (2E)-4-hydroxy-3-methylbut-2-enyl diphosphate + 2 reduced [2Fe-2S]-[ferredoxin] + 2 H(+). It functions in the pathway isoprenoid biosynthesis; dimethylallyl diphosphate biosynthesis; dimethylallyl diphosphate from (2E)-4-hydroxy-3-methylbutenyl diphosphate: step 1/1. It participates in isoprenoid biosynthesis; isopentenyl diphosphate biosynthesis via DXP pathway; isopentenyl diphosphate from 1-deoxy-D-xylulose 5-phosphate: step 6/6. Catalyzes the conversion of 1-hydroxy-2-methyl-2-(E)-butenyl 4-diphosphate (HMBPP) into a mixture of isopentenyl diphosphate (IPP) and dimethylallyl diphosphate (DMAPP). Acts in the terminal step of the DOXP/MEP pathway for isoprenoid precursor biosynthesis. In Ruthia magnifica subsp. Calyptogena magnifica, this protein is 4-hydroxy-3-methylbut-2-enyl diphosphate reductase.